A 531-amino-acid chain; its full sequence is Polypyrimidine tract-binding protein 2 (531 aa).

At M1 the chain carries N-acetylmethionine. 2 positions are modified to phosphoserine: S26 and S27. RRM domains lie at 59-133 (RVLH…YSNH) and 181-257 (LRII…FSKL). S308 bears the Phosphoserine mark. 2 RRM domains span residues 338 to 412 (TVLL…LSKH) and 455 to 529 (ATLH…FSKS).

In terms of assembly, monomer. Interacts with NOVA1; the interaction is direct. Identified in a mRNP complex, at least composed of DHX9, DDX3X, ELAVL1, HNRNPU, IGF2BP1, ILF3, PABPC1, PCBP2, PTBP2, STAU1, STAU2, SYNCRIP and YBX1. Part of a ternary complex containing KHSRP and HNRPH1. Interacts with NOVA2; the interaction is direct. As to expression, mainly expressed in brain although also detected in other tissues like heart and skeletal muscle. Isoform 1 and isoform 2 are specifically expressed in neuronal tissues. Isoform 3 and isoform 4 are expressed in non-neuronal tissues. Isoform 5 and isoform 6 are truncated forms expressed in non-neuronal tissues.

The protein resides in the nucleus. Functionally, RNA-binding protein which binds to intronic polypyrimidine tracts and mediates negative regulation of exons splicing. May antagonize in a tissue-specific manner the ability of NOVA1 to activate exon selection. In addition to its function in pre-mRNA splicing, plays also a role in the regulation of translation. Its function is as follows. Reduced affinity for RNA. The protein is Polypyrimidine tract-binding protein 2 of Homo sapiens (Human).